The sequence spans 78 residues: Small ribosomal subunit protein uS17 (78 aa).

This sequence belongs to the universal ribosomal protein uS17 family. As to quaternary structure, part of the 30S ribosomal subunit.

Functionally, one of the primary rRNA binding proteins, it binds specifically to the 5'-end of 16S ribosomal RNA. The chain is Small ribosomal subunit protein uS17 from Allorhizobium ampelinum (strain ATCC BAA-846 / DSM 112012 / S4) (Agrobacterium vitis (strain S4)).